A 606-amino-acid chain; its full sequence is Scavenger receptor class A member 3 (606 aa).

Residues 1 to 56 (MKVRSAGGDGDALCVTEEDLAGDDEDMPTFPCTQKGRPGPRCSRCQKNLSLHTSVR) lie on the Cytoplasmic side of the membrane. Residues 57–77 (ILYLFLALLLVAVAVLASLVF) form a helical; Signal-anchor for type II membrane protein membrane-spanning segment. The Extracellular segment spans residues 78–606 (RKVDSLSEDI…PGPPGSQSFY (529 aa)). Asparagine 115, asparagine 182, asparagine 224, asparagine 257, asparagine 313, asparagine 337, asparagine 365, asparagine 400, asparagine 430, and asparagine 451 each carry an N-linked (GlcNAc...) asparagine glycan. Residues 454 to 606 (ILRGAPGPPG…PGPPGSQSFY (153 aa)) form a disordered region. In terms of domain architecture, Collagen-like 1 spans 455-513 (LRGAPGPPGPRGFKGDMGVKGPVGGRGPKGDPGSLGPLGPQGPQGQPGEAGPVGERGPV). The span at 485–519 (DPGSLGPLGPQGPQGQPGEAGPVGERGPVGPRGFP) shows a compositional bias: low complexity. Residues 526–535 (GSFGTGGPRG) are compositionally biased toward gly residues. The Collagen-like 2 domain maps to 544-603 (GPPGPEGPPGSPGPSGPQGKPGIAGKTGSPGQRGAMGPKGEPGIQGPPGLPGPPGPPGSQ). Pro residues-rich tracts occupy residues 545–558 (PPGPEGPPGSPGPS) and 591–600 (PGLPGPPGPP).

In terms of tissue distribution, expressed ubiquitously.

The protein localises to the endoplasmic reticulum membrane. Its subcellular location is the golgi apparatus membrane. Its function is as follows. Seems to protect cells by scavenging oxidative molecules or harmful products of oxidation. This Homo sapiens (Human) protein is Scavenger receptor class A member 3 (SCARA3).